Here is a 376-residue protein sequence, read N- to C-terminus: Queuine tRNA-ribosyltransferase (376 aa).

Catalysis depends on Asp93, which acts as the Proton acceptor. Substrate-binding positions include Asp93 to Phe97, Asp147, Gln190, and Gly217. An RNA binding region spans residues Gly248 to Asp254. Asp267 acts as the Nucleophile in catalysis. An RNA binding; important for wobble base 34 recognition region spans residues Thr272–Arg276.

It belongs to the queuine tRNA-ribosyltransferase family. In terms of assembly, homodimer. Within each dimer, one monomer is responsible for RNA recognition and catalysis, while the other monomer binds to the replacement base PreQ1.

The catalysed reaction is 7-aminomethyl-7-carbaguanine + guanosine(34) in tRNA = 7-aminomethyl-7-carbaguanosine(34) in tRNA + guanine. It participates in tRNA modification; tRNA-queuosine biosynthesis. In terms of biological role, catalyzes the base-exchange of a guanine (G) residue with the queuine precursor 7-aminomethyl-7-deazaguanine (PreQ1) at position 34 (anticodon wobble position) in tRNAs with GU(N) anticodons (tRNA-Asp, -Asn, -His and -Tyr). Catalysis occurs through a double-displacement mechanism. The nucleophile active site attacks the C1' of nucleotide 34 to detach the guanine base from the RNA, forming a covalent enzyme-RNA intermediate. The proton acceptor active site deprotonates the incoming PreQ1, allowing a nucleophilic attack on the C1' of the ribose to form the product. After dissociation, two additional enzymatic reactions on the tRNA convert PreQ1 to queuine (Q), resulting in the hypermodified nucleoside queuosine (7-(((4,5-cis-dihydroxy-2-cyclopenten-1-yl)amino)methyl)-7-deazaguanosine). The chain is Queuine tRNA-ribosyltransferase from Rhizobium meliloti (strain 1021) (Ensifer meliloti).